The primary structure comprises 349 residues: Protein RecA (349 aa).

65–72 is an ATP binding site; it reads GPESSGKT.

This sequence belongs to the RecA family.

It is found in the cytoplasm. Its function is as follows. Can catalyze the hydrolysis of ATP in the presence of single-stranded DNA, the ATP-dependent uptake of single-stranded DNA by duplex DNA, and the ATP-dependent hybridization of homologous single-stranded DNAs. It interacts with LexA causing its activation and leading to its autocatalytic cleavage. In Acinetobacter baumannii (strain AB307-0294), this protein is Protein RecA.